The primary structure comprises 68 residues: Sec-independent protein translocase protein TatA (68 aa).

Residues 1–21 (MGSFSIWHWLIVLVVVLLLFG) form a helical membrane-spanning segment. Residues 46–68 (EEAASADKTIDGKTVEHKSDEVR) are disordered. Positions 53–68 (KTIDGKTVEHKSDEVR) are enriched in basic and acidic residues.

This sequence belongs to the TatA/E family. The Tat system comprises two distinct complexes: a TatABC complex, containing multiple copies of TatA, TatB and TatC subunits, and a separate TatA complex, containing only TatA subunits. Substrates initially bind to the TatABC complex, which probably triggers association of the separate TatA complex to form the active translocon.

The protein localises to the cell inner membrane. Part of the twin-arginine translocation (Tat) system that transports large folded proteins containing a characteristic twin-arginine motif in their signal peptide across membranes. TatA could form the protein-conducting channel of the Tat system. The sequence is that of Sec-independent protein translocase protein TatA from Sinorhizobium fredii (strain NBRC 101917 / NGR234).